The following is a 269-amino-acid chain: Ribosomal RNA small subunit methyltransferase J (269 aa).

Residues 125–126 (ER) and Asp179 each bind S-adenosyl-L-methionine.

It belongs to the methyltransferase superfamily. RsmJ family.

It localises to the cytoplasm. The catalysed reaction is guanosine(1516) in 16S rRNA + S-adenosyl-L-methionine = N(2)-methylguanosine(1516) in 16S rRNA + S-adenosyl-L-homocysteine + H(+). Functionally, specifically methylates the guanosine in position 1516 of 16S rRNA. In Pseudomonas syringae pv. tomato (strain ATCC BAA-871 / DC3000), this protein is Ribosomal RNA small subunit methyltransferase J.